Here is a 189-residue protein sequence, read N- to C-terminus: RNA-binding protein (189 aa).

A C4-type zinc finger spans residues 55–69 (CICPSSNHLVDDCVC). The interval 114-189 (FLTSVNPGES…DANTRKSKRK (76 aa)) is disordered. Over residues 158 to 167 (SSSERKRKEY) the composition is skewed to basic and acidic residues. Residues 168 to 180 (SSNSETDLSSDSD) show a composition bias toward low complexity.

This sequence belongs to the phytoreovirus RNA-binding protein family.

It localises to the host cytoplasm. In terms of biological role, constituent of viral factories. Binds to ssRNA and dsRNA. The chain is RNA-binding protein from Alopecurus aequalis (Barnyard grass).